We begin with the raw amino-acid sequence, 430 residues long: Cholecystokinin receptor type A (430 aa).

Residues 1–41 (MDVVDSLFVNGSNITSACELGFENETLFCLDRPRPSKEWQP) are Extracellular-facing. N-linked (GlcNAc...) asparagine glycans are attached at residues asparagine 10, asparagine 13, and asparagine 24. A disulfide bridge connects residues cysteine 18 and cysteine 29. A helical membrane pass occupies residues 42-67 (AVQILLYSLIFLLSVLGNTLVITVLI). Over 68–77 (RNKRMRTVTN) the chain is Cytoplasmic. Residues 78-104 (IFLLSLAVSDLMLCLFCMPFNLIPSLL) form a helical membrane-spanning segment. Topologically, residues 105–115 (KDFIFGSAVCK) are extracellular. Cysteine 114 and cysteine 196 are joined by a disulfide. A helical transmembrane segment spans residues 116–137 (TTTYFMGTSVSVSTFNLVAISL). Residues 138–157 (ERYGAICKPLQSRVWQTKSH) lie on the Cytoplasmic side of the membrane. A helical membrane pass occupies residues 158–178 (ALKVIAATWCLSFTIMTPYPI). Residues 179–210 (YSNLVPFTKNNNQTGNMCRFLLPNDVMQQTWH) lie on the Extracellular side of the membrane. Asparagine 190 carries N-linked (GlcNAc...) asparagine glycosylation. A helical membrane pass occupies residues 211–234 (TFLLLILFLIPGIVMMVAYGLISL). The Cytoplasmic segment spans residues 235–315 (ELYQGIKFDA…NLMAKKRVIR (81 aa)). Residues 316 to 336 (MLIVIVVLFFLCWMPIFSANA) form a helical membrane-spanning segment. Residues 337–351 (WRAYDTVSAERHLSG) lie on the Extracellular side of the membrane. Residues 352–375 (TPISFILLLSYTSSCVNPIIYCFM) form a helical membrane-spanning segment. At 376 to 430 (NKRFRLGFMATFPCCPNPGTPGVRGEMGEEEEGRTTGASLSRYSYSHMSTSAPPP) the chain is on the cytoplasmic side. Cysteine 389 carries S-palmitoyl cysteine lipidation. The disordered stretch occupies residues 396–430 (PGVRGEMGEEEEGRTTGASLSRYSYSHMSTSAPPP). Residues 413 to 430 (ASLSRYSYSHMSTSAPPP) are compositionally biased toward polar residues.

This sequence belongs to the G-protein coupled receptor 1 family.

Its subcellular location is the cell membrane. Receptor for cholecystokinin. Mediates pancreatic growth and enzyme secretion, smooth muscle contraction of the gall bladder and stomach. Has a 1000-fold higher affinity for CCK rather than for gastrin. It modulates feeding and dopamine-induced behavior in the central and peripheral nervous system. This receptor mediates its action by association with G proteins that activate a phosphatidylinositol-calcium second messenger system. This is Cholecystokinin receptor type A (CCKAR) from Cavia porcellus (Guinea pig).